Consider the following 63-residue polypeptide: uncharacterized protein (63 aa).

The chain crosses the membrane as a helical span at residues 15–37 (ISHCHLPLSPATAIAIIICFRIV).

It localises to the membrane. This is an uncharacterized protein from Saccharomyces cerevisiae (strain ATCC 204508 / S288c) (Baker's yeast).